A 179-amino-acid polypeptide reads, in one-letter code: Nuclear transcription factor Y subunit B (179 aa).

The interval 1–32 (MAEAPASPGGGGGSHESGSPRGGGGGGSVREQ) is disordered. Residues 8–28 (PGGGGGSHESGSPRGGGGGGS) show a composition bias toward gly residues. The DNA-binding element occupies 36-42 (LPIANIS). Residues 63–74 (VQECVSEFISFI) are subunit association domain (SAD). The segment at 147–179 (SSSAAEGMGQQGAYNQGMGYMQPQYHNGDISNV) is disordered.

The protein belongs to the NFYB/HAP3 subunit family. In terms of assembly, heterotrimeric transcription factor composed of three components, NF-YA, NF-YB and NF-YC. NF-YB and NF-YC must interact and dimerize for NF-YA association and DNA binding.

Its subcellular location is the nucleus. Its function is as follows. Component of the NF-Y/HAP transcription factor complex. The NF-Y complex stimulates the transcription of various genes by recognizing and binding to a CCAAT motif in promoters. This Zea mays (Maize) protein is Nuclear transcription factor Y subunit B (NFY2).